Here is a 231-residue protein sequence, read N- to C-terminus: Probable transglycosylase SceD (231 aa).

An N-terminal signal peptide occupies residues 1–27 (MKKTLLASSLAVGLGIVAGNAGHEAHA). Residues 103-116 (APSAVQANQVQSQE) are compositionally biased toward polar residues. Residues 103–153 (APSAVQANQVQSQEVEAPQNAQTQQPQASTSNNSQVTATPTESKSSEGSSV) form a disordered region. Residues 119 to 137 (APQNAQTQQPQASTSNNSQ) show a composition bias toward low complexity. Residues 138-153 (VTATPTESKSSEGSSV) show a composition bias toward polar residues.

Belongs to the transglycosylase family. SceD subfamily.

It localises to the secreted. Its function is as follows. Is able to cleave peptidoglycan and affects clumping and separation of bacterial cells. This is Probable transglycosylase SceD (sceD) from Staphylococcus aureus (strain COL).